A 340-amino-acid polypeptide reads, in one-letter code: Phosphate acyltransferase (340 aa).

This sequence belongs to the PlsX family. Homodimer. Probably interacts with PlsY.

Its subcellular location is the cytoplasm. It catalyses the reaction a fatty acyl-[ACP] + phosphate = an acyl phosphate + holo-[ACP]. The protein operates within lipid metabolism; phospholipid metabolism. In terms of biological role, catalyzes the reversible formation of acyl-phosphate (acyl-PO(4)) from acyl-[acyl-carrier-protein] (acyl-ACP). This enzyme utilizes acyl-ACP as fatty acyl donor, but not acyl-CoA. The polypeptide is Phosphate acyltransferase (Pseudomonas savastanoi pv. phaseolicola (strain 1448A / Race 6) (Pseudomonas syringae pv. phaseolicola (strain 1448A / Race 6))).